The chain runs to 78 residues: Pigment-dispersing hormone 1 peptides (78 aa).

A signal peptide spans 1-22; that stretch reads MRSSVIVAVLVVVALAALLTQG. A75 is subject to Alanine amide.

This sequence belongs to the arthropod PDH family. In terms of tissue distribution, eyestalk sinus gland.

The protein localises to the secreted. Functionally, the pigment-dispersing hormone causes the migration of the distal retinal pigment into the proximal end of the pigment chromatophore cells and thus decreases the amount of light entering the retinulas. May also function as a neurotransmitter and/or neuromodulator. In Callinectes sapidus (Blue crab), this protein is Pigment-dispersing hormone 1 peptides (PDH1).